Reading from the N-terminus, the 553-residue chain is Formate--tetrahydrofolate ligase (553 aa).

Thr63–Ser70 contacts ATP.

It belongs to the formate--tetrahydrofolate ligase family.

The enzyme catalyses (6S)-5,6,7,8-tetrahydrofolate + formate + ATP = (6R)-10-formyltetrahydrofolate + ADP + phosphate. Its pathway is one-carbon metabolism; tetrahydrofolate interconversion. The sequence is that of Formate--tetrahydrofolate ligase from Limosilactobacillus fermentum (strain NBRC 3956 / LMG 18251) (Lactobacillus fermentum).